Here is a 1011-residue protein sequence, read N- to C-terminus: Probable beta-galactosidase E (1011 aa).

The N-terminal stretch at 1–19 is a signal peptide; that stretch reads MKSLLKRLIALAAAYSVAA. Residues Tyr-92, Asn-136, Ala-137, Glu-138, and Asn-195 each coordinate substrate. Glu-196 serves as the catalytic Proton donor. Asn-202 carries N-linked (GlcNAc...) asparagine glycosylation. Tyr-261 contacts substrate. An intrachain disulfide couples Cys-267 to Cys-316. Glu-299 (nucleophile) is an active-site residue. Position 365 (Tyr-365) interacts with substrate. 12 N-linked (GlcNAc...) asparagine glycosylation sites follow: Asn-406, Asn-423, Asn-446, Asn-455, Asn-588, Asn-622, Asn-704, Asn-745, Asn-759, Asn-772, Asn-778, and Asn-913.

Belongs to the glycosyl hydrolase 35 family.

The protein resides in the secreted. The catalysed reaction is Hydrolysis of terminal non-reducing beta-D-galactose residues in beta-D-galactosides.. Functionally, cleaves beta-linked terminal galactosyl residues from gangliosides, glycoproteins, and glycosaminoglycans. In Aspergillus fumigatus (strain CBS 144.89 / FGSC A1163 / CEA10) (Neosartorya fumigata), this protein is Probable beta-galactosidase E (lacE).